Reading from the N-terminus, the 714-residue chain is Solute carrier family 12 member 8 (714 aa).

Helical transmembrane passes span 37 to 60 (VLFGTWDGVFTSCMINIFGVVLFL), 72 to 93 (LLGMFLVSFVILVALVTVLSGI), 99 to 116 (SSIGSGGVYSMISSVLGG), 123 to 142 (GLLYVFGQCVAGAMYITGFA), 154 to 173 (IWAVRGISVAVLLALLGINL), and 185 to 205 (LLLFLLAVSTLDFVVGSFTHL). Asparagine 221 is a glycosylation site (N-linked (GlcNAc...) asparagine). The next 5 membrane-spanning stretches (helical) occupy residues 233–254 (FFTVFGVFFPAATGVMAGFNMG), 266–289 (LGSLAAVGISWFLYIIFVFLLGAI), 309–331 (GFLFLLGLYISSLASCMGGLYGA), 360–377 (PVAAICLTSLVTMAFVFV), and 383–403 (LAPIVTINFMLTYVAVDYSYF). Disordered regions lie at residues 471-503 (KLESSQPRQGEGNRTPESQKRKSKKATKQTLQD) and 530-550 (GQESCWNKQTSKSEGTQPEGT). Residues 533–548 (SCWNKQTSKSEGTQPE) are compositionally biased toward polar residues. Transmembrane regions (helical) follow at residues 593–616 (CNPWVSLLGAVGSLLIMFVIQWVY) and 622–643 (GVAAIVYFYIGRASPGLHLGSA).

It belongs to the SLC12A transporter family. In terms of tissue distribution, ubiquitous with very low level in normal skin.

The protein resides in the membrane. Functionally, cation/chloride cotransporter that may play a role in the control of keratinocyte proliferation. The sequence is that of Solute carrier family 12 member 8 (SLC12A8) from Homo sapiens (Human).